The primary structure comprises 93 residues: Small ribosomal subunit protein uS19 (93 aa).

This sequence belongs to the universal ribosomal protein uS19 family.

In terms of biological role, protein S19 forms a complex with S13 that binds strongly to the 16S ribosomal RNA. The polypeptide is Small ribosomal subunit protein uS19 (Syntrophus aciditrophicus (strain SB)).